We begin with the raw amino-acid sequence, 732 residues long: Cyclopenase asqI (732 aa).

Residues His-168, His-172, and His-200 each contribute to the Zn(2+) site.

It belongs to the tyrosinase family. Zn(2+) is required as a cofactor.

The enzyme catalyses (-)-cyclopenine = viridicatin + methyl isocyanate + H(+). It catalyses the reaction (-)-4'-methoxycyclopenine = 4'-methoxyviridicatin + methyl isocyanate + H(+). The protein operates within secondary metabolite biosynthesis. Its pathway is alkaloid biosynthesis. It functions in the pathway mycotoxin biosynthesis. In terms of biological role, cyclopenase; part of the gene cluster that mediates the biosynthesis of the aspoquinolone mycotoxins. Within the pathway, the cyclopenase asqI catalyzes the conversion of 4'-methoxycyclopenin into 4'-methoxyviridicatin. Cyclopenin can also be converted into viridicatin by asqI. The first step of the pathway is catalyzed by the nonribosomal peptide synthetase asqK that condenses anthranilic acid and O-methyl-L-tyrosine to produce 4'-methoxycyclopeptin. 4'-methoxycyclopeptin is then converted to 4'-methoxydehydrocyclopeptin by the ketoglutarate-dependent dioxygenase asqJ. AsqJ also converts its first product 4'-methoxydehydrocyclopeptin to 4'-methoxycyclopenin. The following conversion of 4'-methoxycyclopenin into 4'-methoxyviridicatin is catalyzed by the cyclopenase asqI. 4'-methoxyviridicatin is the precursor of quinolone natural products, and is further converted to quinolinone B. The prenyltransferase asqH1 then catalyzes the canonical Friedel-Crafts alkylation of quinolinone B with dimethylallyl cation to yield dimethylallyl quinolone, which is subjected to FAD-dependent dehydrogenation by the FAD-linked oxidoreductase asqF to yield conjugated aryl diene. The delta(3') double bond then serves as the site of the second alkylation with DMAPP catalyzed by the prenyltransferase asqH2 to yield a carbenium ion intermediate, which can be attacked by H(2)O to yield a styrenyl quinolone containing a C3'-hydroxyprenyl chain. The FAD-dependent monooxygenase asqG performs epoxidation of the terminal C7'-C8' olefin. Finally, after dehydratation of the epoxide at C3 by asqC, the quinolone epoxide rearrangement protein asqO catalyzes an enzymatic 3-exo-tet cyclization to yield the cyclopropyl-THF ring system in aspoquinolone. This chain is Cyclopenase asqI, found in Emericella nidulans (strain FGSC A4 / ATCC 38163 / CBS 112.46 / NRRL 194 / M139) (Aspergillus nidulans).